The following is a 658-amino-acid chain: MSAFLDKLSGSQCVSLEKCGDVVVSTNDCMIALYCHFCRDLFTQLPEFLRHLQGAHSDVLHFTKEHNVYSVEELMSGEQDDAQEDAHSAGHNSSSGDSRIPAKSEDSRAIDASEDNSDNSPVKSEQKGMQNEINLLAEVTNILLQSKEREHINNESKPENGGFNGPCKKASSESNSLRICDLKSHTIARTSRKRMSMLKNRILRVIDSDVSAKREMKPSEPNYILPITETIQEDNIPKICFETQPKPIPSSSNLSVRKSSLSEPNVSLACTNYAAKKTTLTIPKLLNCTPKSNLPCQQSQVYSDSNGRSETYHISKATSQGSKEMESFPVKITQIDVLPPLILPETSTTPNQKERVNALVENNTVNLYTAQNLPKEKPKKFFKKRGELWMKSEDSPSKSVKITKYRGNPIIVKRVQTSSAKSSPCKTQIRSNDKTKCFASEFNSTKIRKLKMENSIALKKEDPCSNKSIRLSKMATISSCEILKVVGLPAITDQKLEDTLLLDELETMRKKADQFSKIYKKYDSIWNYRKIFPPGKPEFISQKMFALTREVNETMGCNLANSAIKSIINQISVWHYNIYTKCIVLDTISETARHTLKLFSFLPVSFAYFCKCCDDIFTLNEDYTRHLVSQQARYQCTKCIKAFKYRGHFEKHLQNVHP.

Residues 33–56 form a C2H2-type 1 zinc finger; sequence LYCHFCRDLFTQLPEFLRHLQGAH. Disordered stretches follow at residues 78-127 and 151-175; these read EQDD…SEQK and HINNESKPENGGFNGPCKKASSESN. A compositionally biased stretch (basic and acidic residues) spans 100-111; sequence IPAKSEDSRAID. Residues 118-127 show a composition bias toward polar residues; that stretch reads DNSPVKSEQK. The C2H2-type 2; degenerate zinc-finger motif lies at 608 to 630; it reads YFCKCCDDIFTLNEDYTRHLVSQ. The segment at 634–657 adopts a C2H2-type 3 zinc-finger fold; the sequence is YQCTKCIKAFKYRGHFEKHLQNVH.

It belongs to the Teflon family.

It is found in the nucleus. The protein localises to the chromosome. Its function is as follows. Specifically required in males for proper segregation of autosomal bivalents at meiosis I. Expression is required in the male germ line prior to spermatocyte stage S4. May have a role as a bridging molecule maintaining adhesion to hold autosome bivalents together via heterochromatic connections. The sequence is that of Protein teflon from Drosophila erecta (Fruit fly).